We begin with the raw amino-acid sequence, 184 residues long: MSAWFIQKAVSVLSRGGVLAYPTEAVWGLGCDPSCEDAVNRILQLKRRPWRKGLILVSGQIEHFSQLLDRLPQQQKDQILATWPGPVTWVVPDPGVYAPLVRGAHDAIAIRVTAHPLVVELTKAFGGPIVSTSANPATREPARTLFDCRRYFKSGVDHYLPGKLSGLSKPSQIRDAATGAILRQ.

Positions 3–184 (AWFIQKAVSV…DAATGAILRQ (182 aa)) constitute a YrdC-like domain.

It belongs to the SUA5 family. TsaC subfamily.

The protein resides in the cytoplasm. It catalyses the reaction L-threonine + hydrogencarbonate + ATP = L-threonylcarbamoyladenylate + diphosphate + H2O. Functionally, required for the formation of a threonylcarbamoyl group on adenosine at position 37 (t(6)A37) in tRNAs that read codons beginning with adenine. Catalyzes the conversion of L-threonine, HCO(3)(-)/CO(2) and ATP to give threonylcarbamoyl-AMP (TC-AMP) as the acyladenylate intermediate, with the release of diphosphate. The sequence is that of Threonylcarbamoyl-AMP synthase from Hahella chejuensis (strain KCTC 2396).